The following is a 449-amino-acid chain: Keratin, type I cuticular Ha7 (449 aa).

The segment at 1–104 (MTSFYSTSSC…YGKNTLNGHE (104 aa)) is head. The region spanning 104–415 (EKETMKFLND…NLLESEDCKL (312 aa)) is the IF rod domain. Residues 105–139 (KETMKFLNDRLANYLEKVRQLEQENAELETTLLER) form a coil 1A region. Residues 140–150 (SKCHESTVCPD) form a linker 1 region. The coil 1B stretch occupies residues 151 to 251 (YQSYFRTIEE…HEQEVKILRS (101 aa)). A linker 12 region spans residues 252–267 (QLGEKFRIELDIEPTI). The segment at 268–411 (DLNRVLGEMR…ATYRNLLESE (144 aa)) is coil 2. A tail region spans residues 416-449 (PCNPCSTPASCTSCPSCGPVTGGSPSGHGASMGR).

This sequence belongs to the intermediate filament family.

The sequence is that of Keratin, type I cuticular Ha7 (KRT37) from Homo sapiens (Human).